The primary structure comprises 386 residues: Coproporphyrinogen-III oxidase 1, chloroplastic (386 aa).

Residues 1 to 48 (MASHSSTLLSSPTFAPFSSHRLHYSPNPSTLRFSRPIRNKPNLALRCS) constitute a chloroplast transit peptide. Residues 125-134 (VLQDGNVFEK) are important for dimerization. Ser-174 contacts substrate. Catalysis depends on His-188, which acts as the Proton donor. Substrate-binding positions include 190–192 (NYR) and 344–349 (GGRIES). Residues 326–361 (YVEFNLVYDRGTTFGLKTGGRIESILVSLPLSARWE) are important for dimerization.

The protein belongs to the aerobic coproporphyrinogen-III oxidase family. As to quaternary structure, homodimer. Expressed in cotyledons, leaves and roots.

It is found in the plastid. The protein resides in the chloroplast. It catalyses the reaction coproporphyrinogen III + O2 + 2 H(+) = protoporphyrinogen IX + 2 CO2 + 2 H2O. The protein operates within porphyrin-containing compound metabolism; protoporphyrin-IX biosynthesis; protoporphyrinogen-IX from coproporphyrinogen-III (O2 route): step 1/1. Its pathway is porphyrin-containing compound metabolism; chlorophyll biosynthesis. Its function is as follows. Key enzyme in heme biosynthesis. Catalyzes the oxidative decarboxylation of propionic acid side chains of rings A and B of coproporphyrinogen III. The sequence is that of Coproporphyrinogen-III oxidase 1, chloroplastic (CPX1) from Arabidopsis thaliana (Mouse-ear cress).